The sequence spans 301 residues: DNA repair protein RecO (301 aa).

The interval 272–301 is disordered; it reads PTPSGQGSPVAAAAFSEEDSETLGSNLKKL.

It belongs to the RecO family.

Its function is as follows. Involved in DNA repair and RecF pathway recombination. The protein is DNA repair protein RecO of Synechococcus sp. (strain JA-3-3Ab) (Cyanobacteria bacterium Yellowstone A-Prime).